A 233-amino-acid chain; its full sequence is Probable translation initiation factor, mitochondrial (233 aa).

A mitochondrion-targeting transit peptide spans 1–39 (MNSYLQFPHRKLFIQFSYSLTSVFRKCQSRTFMNSQFAS).

It belongs to the IF-3 family.

The protein localises to the mitochondrion. Its function is as follows. May be involved in mitochondrial translation initiation. In Schizosaccharomyces pombe (strain 972 / ATCC 24843) (Fission yeast), this protein is Probable translation initiation factor, mitochondrial.